Here is a 228-residue protein sequence, read N- to C-terminus: Cytochrome c oxidase subunit 2 (228 aa).

Over 1-26 (MATWANLGLQNSSSPLMEQLNFFHDH) the chain is Mitochondrial intermembrane. A helical transmembrane segment spans residues 27 to 48 (TLLILIMITVMIAYIMFMLFFN). Residues 49 to 62 (KFTNRYLLHGQTIE) are Mitochondrial matrix-facing. A helical transmembrane segment spans residues 63–82 (IIWTILPAIILMFIAFPSLR). The Mitochondrial intermembrane portion of the chain corresponds to 83–228 (LLYLMDEINS…FIKWISSQMN (146 aa)). Residues H161, C196, E198, C200, H204, and M207 each coordinate Cu cation. Position 198 (E198) interacts with Mg(2+).

It belongs to the cytochrome c oxidase subunit 2 family. As to quaternary structure, component of the cytochrome c oxidase (complex IV, CIV), a multisubunit enzyme composed of a catalytic core of 3 subunits and several supernumerary subunits. The complex exists as a monomer or a dimer and forms supercomplexes (SCs) in the inner mitochondrial membrane with ubiquinol-cytochrome c oxidoreductase (cytochrome b-c1 complex, complex III, CIII). Cu cation is required as a cofactor.

It is found in the mitochondrion inner membrane. The catalysed reaction is 4 Fe(II)-[cytochrome c] + O2 + 8 H(+)(in) = 4 Fe(III)-[cytochrome c] + 2 H2O + 4 H(+)(out). In terms of biological role, component of the cytochrome c oxidase, the last enzyme in the mitochondrial electron transport chain which drives oxidative phosphorylation. The respiratory chain contains 3 multisubunit complexes succinate dehydrogenase (complex II, CII), ubiquinol-cytochrome c oxidoreductase (cytochrome b-c1 complex, complex III, CIII) and cytochrome c oxidase (complex IV, CIV), that cooperate to transfer electrons derived from NADH and succinate to molecular oxygen, creating an electrochemical gradient over the inner membrane that drives transmembrane transport and the ATP synthase. Cytochrome c oxidase is the component of the respiratory chain that catalyzes the reduction of oxygen to water. Electrons originating from reduced cytochrome c in the intermembrane space (IMS) are transferred via the dinuclear copper A center (CU(A)) of subunit 2 and heme A of subunit 1 to the active site in subunit 1, a binuclear center (BNC) formed by heme A3 and copper B (CU(B)). The BNC reduces molecular oxygen to 2 water molecules using 4 electrons from cytochrome c in the IMS and 4 protons from the mitochondrial matrix. This chain is Cytochrome c oxidase subunit 2 (COII), found in Aedes aegypti (Yellowfever mosquito).